The following is a 122-amino-acid chain: Methylglyoxal synthase (122 aa).

The MGS-like domain occupies 1-122 (MRIALIAHDK…DLFIKHLKGK (122 aa)). Residues His8, Lys12, 34–37 (TGTT), and 54–55 (SG) contribute to the substrate site. Asp60 acts as the Proton donor/acceptor in catalysis. Residue His87 participates in substrate binding.

It belongs to the methylglyoxal synthase family.

The catalysed reaction is dihydroxyacetone phosphate = methylglyoxal + phosphate. Functionally, catalyzes the formation of methylglyoxal from dihydroxyacetone phosphate. This Acholeplasma laidlawii (strain PG-8A) protein is Methylglyoxal synthase.